The following is a 59-amino-acid chain: Large ribosomal subunit protein uL30 (59 aa).

This sequence belongs to the universal ribosomal protein uL30 family. In terms of assembly, part of the 50S ribosomal subunit.

This Photobacterium profundum (strain SS9) protein is Large ribosomal subunit protein uL30.